The sequence spans 635 residues: Protein OPG056 (635 aa).

The protein belongs to the orthopoxvirus OPG056 family. Interacts with protein OPG164. Interacts with protein OPG064.

It is found in the virion membrane. The protein localises to the host endosome. Plays a role in intracellular enveloped virus (IEV) transport to the cell surface through microtubule transport. Together with protein OPG064, forms a complex that interacts with host KLC2 (kinesin light chain isoform 2) to engage the kinesin-1 complex and thereby promote IEV trafficking. In Variola virus (isolate Human/India/Ind3/1967) (VARV), this protein is Protein OPG056 (OPG056).